Consider the following 805-residue polypeptide: Leucine--tRNA ligase (805 aa).

Positions P39–H50 match the 'HIGH' region motif. The short motif at K583–S587 is the 'KMSKS' region element. K586 serves as a coordination point for ATP.

This sequence belongs to the class-I aminoacyl-tRNA synthetase family.

The protein localises to the cytoplasm. The catalysed reaction is tRNA(Leu) + L-leucine + ATP = L-leucyl-tRNA(Leu) + AMP + diphosphate. This Mycoplasmoides gallisepticum (strain R(low / passage 15 / clone 2)) (Mycoplasma gallisepticum) protein is Leucine--tRNA ligase.